We begin with the raw amino-acid sequence, 142 residues long: Large ribosomal subunit protein uL13 (142 aa).

This sequence belongs to the universal ribosomal protein uL13 family. As to quaternary structure, part of the 50S ribosomal subunit.

Functionally, this protein is one of the early assembly proteins of the 50S ribosomal subunit, although it is not seen to bind rRNA by itself. It is important during the early stages of 50S assembly. In Akkermansia muciniphila (strain ATCC BAA-835 / DSM 22959 / JCM 33894 / BCRC 81048 / CCUG 64013 / CIP 107961 / Muc), this protein is Large ribosomal subunit protein uL13.